The chain runs to 503 residues: MDTLLRTHNRLELLYPLHELAKRHFLSPSPNPQNPNFKFFSRKPYQKKCRNGYIGVSSNQLLDLVPEIKKEHLEFDLPLYDPSKALTLDLAVVGGGPLARSCSTSLGGGLSVVSIDPNPKLIWPNNYGVWVDEFEDMDLLDCLDATWSGAIVYVDDRSTKNLSRPYARVNRKNLKSKMMKKCVSNGVRFHQATVVKAMHEEEKSYLICSDGVTIDARVVLDATGFSRCLVQYDKPYNPGYQVAYGILAEVEEHPFDVDKMVFMDWRDSHLNGKAELNERNAKIPTFLYAMPFSSNRIFLEETSLVARPGLKMEDIQERMVARLNHLGIRIKSIEEDERCVIPMGGPLPVIPQRVVGIGGTAGMVHPSTGYMVARTLAAAPIVANSIVQYLVSDSGLSGNDLSADVWKDLWPIERRRQREFFCFGMDILLKLDLEGTRRFFDAFFDLEPRYWHGFLSSRLFLPELVPFGLSLFSHASNTCKLEIMAKGTLPLVNMINNLVQDRD.

The transit peptide at 1 to 85 (MDTLLRTHNR…DLPLYDPSKA (85 aa)) directs the protein to the chloroplast and chromoplast. An NAD(+)-binding site is contributed by 90-117 (LAVVGGGPLARSCSTSLGGGLSVVSIDP).

The protein belongs to the lycopene cyclase family.

The protein localises to the plastid. The protein resides in the chloroplast. Its subcellular location is the chromoplast. It is found in the chromoplast membrane. It localises to the chloroplast membrane. It catalyses the reaction a carotenoid psi-end group = a carotenoid beta-end derivative. Its pathway is carotenoid biosynthesis; beta-carotene biosynthesis. It functions in the pathway carotenoid biosynthesis; beta-zeacarotene biosynthesis. In terms of biological role, catalyzes the double cyclization reaction which converts lycopene to beta-carotene and neurosporene to beta-zeacarotene. This chain is Lycopene beta cyclase, chloroplastic/chromoplastic (LCY1), found in Narcissus pseudonarcissus (Daffodil).